A 258-amino-acid chain; its full sequence is Regulatory protein RecX (258 aa).

Belongs to the RecX family.

It is found in the cytoplasm. Modulates RecA activity. The polypeptide is Regulatory protein RecX (Streptococcus pneumoniae (strain Hungary19A-6)).